The following is a 78-amino-acid chain: Small ribosomal subunit protein bS16c (78 aa).

Belongs to the bacterial ribosomal protein bS16 family.

Its subcellular location is the plastid. The protein localises to the chloroplast. The chain is Small ribosomal subunit protein bS16c from Adiantum capillus-veneris (Maidenhair fern).